We begin with the raw amino-acid sequence, 25 residues long: Caerin-1.7 (25 aa).

Residue Leu-25 is modified to Leucine amide.

The protein belongs to the frog skin active peptide (FSAP) family. Caerin subfamily. In terms of processing, caerin-1.7.1 does not have any antibacterial activity. In terms of tissue distribution, expressed by the skin dorsal glands.

It localises to the secreted. Functionally, antibacterial peptide, that adopts an alpha helical conformation which can disrupt bacterial membranes. Each caerin displays a different antimicrobial specificity. The protein is Caerin-1.7 of Ranoidea xanthomera (Northern orange-eyed tree frog).